Reading from the N-terminus, the 249-residue chain is Small ribosomal subunit protein uS3y (249 aa).

Residues 21–92 (LNEVLTRELA…SVELYAEKVN (72 aa)) form the KH type-2 domain. At serine 212 the chain carries Phosphoserine.

Belongs to the universal ribosomal protein uS3 family.

The sequence is that of Small ribosomal subunit protein uS3y (RPS3B) from Arabidopsis thaliana (Mouse-ear cress).